The sequence spans 400 residues: Gap junction alpha-8 protein (400 aa).

Residues 2–12 lie within the membrane without spanning it; that stretch reads GDWSFLGNILE. Residues 13–21 are Cytoplasmic-facing; it reads QVNEQSTVI. The helical transmembrane segment at 22-42 threads the bilayer; that stretch reads GRVWLTVLFIFRILILGTAAE. At 43-71 the chain is on the extracellular side; the sequence is LVWGDEQSDFVCNTQQPGCENVCYDEAFP. 3 disulfide bridges follow: Cys-54–Cys-196, Cys-61–Cys-190, and Cys-65–Cys-185. The helical transmembrane segment at 72 to 92 threads the bilayer; it reads ISHIRLWVLQIIFVSTPSLVY. Topologically, residues 93–156 are cytoplasmic; it reads FGHAVHHVRM…GTLLRTYILH (64 aa). Basic and acidic residues predominate over residues 104 to 118; that stretch reads EKRKEREEAERRQQA. The disordered stretch occupies residues 104–139; it reads EKRKEREEAERRQQAEVDEEKLPLAPNQNKGNNPDG. Over residues 129 to 138 the composition is skewed to polar residues; the sequence is PNQNKGNNPD. The chain crosses the membrane as a helical span at residues 157–177; the sequence is IIFKTLFEVGFIVGQYFLYGF. The Extracellular segment spans residues 178–205; the sequence is RILPLYRCGRWPCPNLVDCFVSRPTEKT. Residues 206-226 traverse the membrane as a helical segment; it reads IFIMFMLVVAAVSLFLNLVEI. Residues 227 to 400 lie on the Cytoplasmic side of the membrane; that stretch reads SHLILKRIRR…SRARSDDLTV (174 aa). A disordered region spans residues 323 to 400; the sequence is YAQAKEPEEE…SRARSDDLTV (78 aa). Residues 327-336 are compositionally biased toward basic and acidic residues; that stretch reads KEPEEEKVKA. A compositionally biased stretch (acidic residues) spans 337–346; sequence EEEEEQEEEQ. At Ser-364 the chain carries Phosphoserine; by CK2. Low complexity predominate over residues 381-392; it reads RSLSRLSKASSR.

This sequence belongs to the connexin family. Alpha-type (group II) subfamily. As to quaternary structure, a hemichannel or connexon is composed of a hexamer of connexins. A functional gap junction is formed by the apposition of two hemichannels. Forms heteromeric channels with GJA3. During early stages of lens development, interacts with the C-terminus of MIP. In terms of processing, proteolytically cleaved by caspase-3 during lens development. Phosphorylated on Ser-364; which inhibits cleavage by caspase-3.

The protein localises to the cell membrane. The protein resides in the cell junction. It is found in the gap junction. Structural component of eye lens gap junctions. Gap junctions are dodecameric channels that connect the cytoplasm of adjoining cells. They are formed by the docking of two hexameric hemichannels, one from each cell membrane. Small molecules and ions diffuse from one cell to a neighboring cell via the central pore. The sequence is that of Gap junction alpha-8 protein (GJA8) from Gallus gallus (Chicken).